The chain runs to 459 residues: UDP-glycosyltransferase 79B30 (459 aa).

His-18 serves as the catalytic Proton acceptor. His-18 provides a ligand contact to an anthocyanidin. The active-site Charge relay is the Asp-115. The UDP-alpha-D-glucose site is built by Thr-136, Val-333, Gln-335, His-350, Ser-355, and Glu-358. An anthocyanidin is bound at residue Gly-373. UDP-alpha-D-glucose-binding residues include Asp-374 and Gln-375.

It belongs to the UDP-glycosyltransferase family. In terms of tissue distribution, expressed in leaves.

The enzyme catalyses a flavonol 3-O-beta-D-glucoside + UDP-alpha-D-glucose = a flavonol 3-O-beta-D-glucosyl-(1-&gt;2)-beta-D-glucoside + UDP + H(+). In terms of biological role, flavonol 3-O-glucoside/galactoside (1-&gt;2) glucosyltransferase converting kaempferol 3-O-glucoside to kaempferol 3-O-sophoroside. Has a broad in vitro activity for kaempferol/ quercetin 3-O-glucoside/galactoside derivatives, but cannot glucosylate kaempferol 3-O-rhamnosyl-(1-&gt;4)-[rhamnosyl-(1-&gt;6)- glucoside] and 3-O-rhamnosyl-(1-&gt;4)-[glucosyl-(1-&gt;6)-glucoside]. Has a higher preference for UDP-glucose than UDP-galactose, and no activity with UDP-arabinose and UDP-glucuronic acid. Represents probably a recessive allele of the gene. In Glycine max (Soybean), this protein is UDP-glycosyltransferase 79B30.